An 847-amino-acid polypeptide reads, in one-letter code: Putative membrane protein SCO5905 (847 aa).

12 helical membrane-spanning segments follow: residues 18-38 (AVVV…APAL), 187-207 (GGDK…LLAI), 215-235 (LVPL…GAIL), 248-268 (ASIM…IITA), 302-322 (IVLA…GFGP), 326-346 (LGVA…VLLL), 381-401 (VKVA…LLGY), 539-559 (DTTL…VLLL), 562-582 (LLAP…TLGA), 600-620 (VTAY…IFIM), 643-663 (TGGV…VLMT), and 672-692 (FGFA…PLLV). Positions 708 to 729 (RPGTPQTPSTPTSEPPSADAPA) are disordered. Transmembrane regions (helical) follow at residues 744 to 764 (FTWI…GMYL), 778 to 798 (FGTL…LVAI), and 808 to 828 (TIFA…EIWA).

Belongs to the resistance-nodulation-cell division (RND) (TC 2.A.6) family. MmpL subfamily.

Its subcellular location is the cell membrane. This chain is Putative membrane protein SCO5905, found in Streptomyces coelicolor (strain ATCC BAA-471 / A3(2) / M145).